We begin with the raw amino-acid sequence, 33 residues long: Protamine TP16 (33 aa).

The segment at 1–33 (MPRRRRSSSRPVRRRRRARVSRRRRRRGRRRRR) is disordered.

As to expression, testis.

The protein localises to the nucleus. The protein resides in the chromosome. Its function is as follows. Protamines substitute for histones in the chromatin of sperm during the haploid phase of spermatogenesis. They compact sperm DNA into a highly condensed, stable and inactive complex. The protein is Protamine TP16 of Oncorhynchus mykiss (Rainbow trout).